Here is a 690-residue protein sequence, read N- to C-terminus: Elongation factor G (690 aa).

One can recognise a tr-type G domain in the interval 8-283 (SKCRNIGIMA…AVVDYLPSPN (276 aa)). Residues 17–24 (AHIDAGKT), 81–85 (DTPGH), and 135–138 (NKMD) contribute to the GTP site.

It belongs to the TRAFAC class translation factor GTPase superfamily. Classic translation factor GTPase family. EF-G/EF-2 subfamily.

It localises to the cytoplasm. Its function is as follows. Catalyzes the GTP-dependent ribosomal translocation step during translation elongation. During this step, the ribosome changes from the pre-translocational (PRE) to the post-translocational (POST) state as the newly formed A-site-bound peptidyl-tRNA and P-site-bound deacylated tRNA move to the P and E sites, respectively. Catalyzes the coordinated movement of the two tRNA molecules, the mRNA and conformational changes in the ribosome. This Anaplasma phagocytophilum (strain HZ) protein is Elongation factor G.